Here is a 426-residue protein sequence, read N- to C-terminus: Serine protease HTRA2, mitochondrial (426 aa).

The transit peptide at 1-30 (MALRGSHRLDDFIRRCSALTLFHSQAPSRR) directs the protein to the mitochondrion. Residues 30–59 (RVSHCGRDRRQQQDPPGQGRQEQQESGGGH) are disordered. Positions 31–78 (VSHCGRDRRQQQDPPGQGRQEQQESGGGHWSRFGWRSLIRFFVPFSLG) are excised as a propeptide. Residues 42 to 54 (QDPPGQGRQEQQE) show a composition bias toward low complexity. A helical membrane pass occupies residues 68–86 (LIRFFVPFSLGAVASSLVI). Residues 79-82 (AVAS) carry the IAP-binding motif. The interval 143 to 306 (SNGSGFIIEQ…IPIDYVKVFL (164 aa)) is serine protease. Catalysis depends on charge relay system residues His-161, Asp-193, and Ser-270. Residues 329-414 (MGITMLTLTP…HLDIVILRGV (86 aa)) form the PDZ domain.

This sequence belongs to the peptidase S1C family. As to quaternary structure, interacts with th/DIAP1 (via BIR 2 domain).

It is found in the mitochondrion intermembrane space. The protein localises to the mitochondrion membrane. It catalyses the reaction Cleavage of non-polar aliphatic amino-acids at the P1 position, with a preference for Val, Ile and Met. At the P2 and P3 positions, Arg is selected most strongly with a secondary preference for other hydrophilic residues.. Functionally, serine protease that shows proteolytic activity against a non-specific substrate beta-casein. Promotes or induces cell death either by direct binding to and inhibition of BIRC proteins (also called inhibitor of apoptosis proteins, IAPs), leading to an increase in caspase activity, or by a BIRC inhibition-independent, caspase-independent and serine protease activity-dependent mechanism. Can antagonize antiapoptotic activity of th/Diap1 by directly inducing the degradation of th/Diap1. The sequence is that of Serine protease HTRA2, mitochondrial from Drosophila ananassae (Fruit fly).